Here is a 788-residue protein sequence, read N- to C-terminus: Ribonucleoside-diphosphate reductase subunit alpha (788 aa).

Residues 2–92 (ITVVKRNGRI…LYDLYHKVSG (91 aa)) form the ATP-cone domain. ATP is bound by residues lysine 6, 12–18 (EPLDITK), and threonine 52. Threonine 200 contributes to the GDP binding site. Residues cysteine 216 and cysteine 497 are joined by a disulfide bond. DTTP-binding positions include 223 to 225 (DNI) and arginine 253. Position 424 (asparagine 424) interacts with GDP. Asparagine 424 (proton acceptor) is an active-site residue. Residue cysteine 426 is the Cysteine radical intermediate of the active site. GDP-binding positions include glutamate 428 and 661–663 (SSI). Glutamate 428 acts as the Proton acceptor in catalysis.

It belongs to the ribonucleoside diphosphate reductase large chain family. As to quaternary structure, tetramer of two alpha and two beta subunits.

The enzyme catalyses a 2'-deoxyribonucleoside 5'-diphosphate + [thioredoxin]-disulfide + H2O = a ribonucleoside 5'-diphosphate + [thioredoxin]-dithiol. Under complex allosteric control mediated by deoxynucleoside triphosphates and ATP binding to separate specificity and activation sites on the alpha subunit. The type of nucleotide bound at the specificity site determines substrate preference. It seems probable that ATP makes the enzyme reduce CDP and UDP, dGTP favors ADP reduction and dTTP favors GDP reduction. Stimulated by ATP and inhibited by dATP binding to the activity site. Its function is as follows. Provides the precursors necessary for DNA synthesis. Catalyzes the biosynthesis of deoxyribonucleotides from the corresponding ribonucleotides. This chain is Ribonucleoside-diphosphate reductase subunit alpha (nrdA), found in Helicobacter pylori (strain ATCC 700392 / 26695) (Campylobacter pylori).